Consider the following 538-residue polypeptide: Putative cysteine ligase BshC (538 aa).

Residues 248–268 (ISKYKEVQEGLRNQQEVIKEL) are a coiled coil.

Belongs to the BshC family.

Functionally, involved in bacillithiol (BSH) biosynthesis. May catalyze the last step of the pathway, the addition of cysteine to glucosamine malate (GlcN-Mal) to generate BSH. This is Putative cysteine ligase BshC from Bacillus cereus (strain G9842).